A 609-amino-acid polypeptide reads, in one-letter code: X-ray repair cross-complementing protein 6 (609 aa).

The interval Met1–Gly28 is disordered. Residue Ser2 is modified to N-acetylserine. Ser2 is modified (phosphoserine). Ser6 carries the post-translational modification Phosphoserine; by PRKDC. The span at Gly12–Leu24 shows a compositional bias: acidic residues. The residue at position 27 (Ser27) is a Phosphoserine. The Schiff-base intermediate with DNA; for 5'-deoxyribose-5-phosphate lyase activity role is filled by Lys31. Lys31 bears the N6-acetyllysine mark. Phosphoserine; by PRKDC is present on Ser51. In terms of domain architecture, Ku spans Leu261–Lys468. The segment at Val277–Asp341 is DNA-binding. A Glycyl lysine isopeptide (Lys-Gly) (interchain with G-Cter in SUMO2) cross-link involves residue Lys287. At Ser306 the chain carries Phosphoserine. Residues Lys317, Lys331, and Lys338 each carry the N6-acetyllysine modification. Residue Lys317 forms a Glycyl lysine isopeptide (Lys-Gly) (interchain with G-Cter in SUMO2) linkage. Positions Ser373 to Val482 are interaction with XRCC5. Thr455 carries the post-translational modification Phosphothreonine. Lys461 bears the N6-acetyllysine mark. Phosphoserine occurs at positions 477 and 520. Positions Pro536–Glu562 are disordered. N6-acetyllysine occurs at positions 539, 542, and 544. Position 550 is a phosphoserine (Ser550). Positions Ser550 to Asp609 are interaction with DEAF1. An N6-acetyllysine mark is found at Lys553 and Lys556. Residue Lys556 forms a Glycyl lysine isopeptide (Lys-Gly) (interchain with G-Cter in SUMO2) linkage. At Ser560 the chain carries Phosphoserine. The residue at position 570 (Lys570) is an N6,N6,N6-trimethyllysine. Residues Leu573 to Phe607 enclose the SAP domain. Residues Val578–Glu583 are interaction with BAX.

This sequence belongs to the ku70 family. As to quaternary structure, forms a heterodimer with XRCC5/Ku80; heterodimerization stabilizes XRCC5 protein. Component of the core long-range non-homologous end joining (NHEJ) complex (also named DNA-PK complex) composed of PRKDC, LIG4, XRCC4, XRCC6/Ku70, XRCC5/Ku86 and NHEJ1/XLF. Additional component of the NHEJ complex includes PAXX. Following autophosphorylation, PRKDC dissociates from DNA, leading to formation of the short-range NHEJ complex, composed of LIG4, XRCC4, XRCC6/Ku70, XRCC5/Ku86 and NHEJ1/XLF. The XRCC5-XRCC6 dimer also associates with NAA15, and this complex binds to the osteocalcin promoter and activates osteocalcin expression. In addition, XRCC6 interacts with the osteoblast-specific transcription factors MSX2, RUNX2 and DLX5. Interacts with ELF3. Interacts with ATP23. The XRCC5-XRRC6 dimer associates in a DNA-dependent manner with APEX1. Binds to CDK9 isoform 2. Identified in a complex with DEAF1 and XRCC5. Interacts with DEAF1 (via the SAND domain); the interaction is direct and may be inhibited by DNA-binding. Interacts with CLU. Interacts with NR4A3; the DNA-dependent protein kinase complex DNA-PK phosphorylates and activates NR4A3 and prevents NR4A3 ubiquitinylation and degradation. Interacts with CYREN isoform 1 (CYREN-1) and isoform 4 (CYREN-2) (via KBM motif). Interacts (via N-terminus) with HSF1 (via N-terminus); this interaction is direct and prevents XRCC5/XRCC6 heterodimeric binding and non-homologous end joining (NHEJ) repair activities induced by ionizing radiation (IR). Part of the HDP-RNP complex composed of at least HEXIM1, PRKDC, XRCC5, XRCC6, paraspeckle proteins (SFPQ, NONO, PSPC1, RBM14, and MATR3) and NEAT1 RNA. Interacts with HMBOX1. Interacts with ATF7. Interacts with APLF (via KBM motif). Interacts with WRN (via KBM motif). The XRCC5-XRCC6 dimer associates with ALKBH2. Interacts with TPRN; TPRN interacts with a number of DNA damage response proteins, is recruited to sites of DNA damage and may play a role in DNA damage repair. When not acetylated, interacts with BAX. Interacts with ERCC6L2. In terms of assembly, (Microbial infection) Interacts with human T-cell leukemia virus 1/HTLV-1 protein HBZ. In terms of processing, phosphorylation by PRKDC may enhance helicase activity. Phosphorylation of Ser-51 does not affect DNA repair. Post-translationally, ADP-ribosylated by PARP3. Methylation by SETD4 leads to accumulation in the cytoplasm and is a prerequisite for acetylation, possibly due to the change of subcellular from the nucleus to the cytosol initiated by methylation, acetylation occurring in the cytosol. In terms of processing, acetylation can be catalyzed in vitro by CREBBP/CBP and KAT2B/PCAF.

It is found in the nucleus. The protein localises to the chromosome. It localises to the cytoplasm. In terms of biological role, single-stranded DNA-dependent ATP-dependent helicase that plays a key role in DNA non-homologous end joining (NHEJ) by recruiting DNA-PK to DNA. Required for double-strand break repair and V(D)J recombination. Also has a role in chromosome translocation. Has a role in chromosome translocation. The DNA helicase II complex binds preferentially to fork-like ends of double-stranded DNA in a cell cycle-dependent manner. It works in the 3'-5' direction. During NHEJ, the XRCC5-XRRC6 dimer performs the recognition step: it recognizes and binds to the broken ends of the DNA and protects them from further resection. Binding to DNA may be mediated by XRCC6. The XRCC5-XRRC6 dimer acts as a regulatory subunit of the DNA-dependent protein kinase complex DNA-PK by increasing the affinity of the catalytic subunit PRKDC to DNA by 100-fold. The XRCC5-XRRC6 dimer is probably involved in stabilizing broken DNA ends and bringing them together. The assembly of the DNA-PK complex to DNA ends is required for the NHEJ ligation step. Probably also acts as a 5'-deoxyribose-5-phosphate lyase (5'-dRP lyase), by catalyzing the beta-elimination of the 5' deoxyribose-5-phosphate at an abasic site near double-strand breaks. 5'-dRP lyase activity allows to 'clean' the termini of abasic sites, a class of nucleotide damage commonly associated with strand breaks, before such broken ends can be joined. The XRCC5-XRRC6 dimer together with APEX1 acts as a negative regulator of transcription. In association with NAA15, the XRCC5-XRRC6 dimer binds to the osteocalcin promoter and activates osteocalcin expression. Plays a role in the regulation of DNA virus-mediated innate immune response by assembling into the HDP-RNP complex, a complex that serves as a platform for IRF3 phosphorylation and subsequent innate immune response activation through the cGAS-STING pathway. Negatively regulates apoptosis by interacting with BAX and sequestering it from the mitochondria. Might have deubiquitination activity, acting on BAX. This chain is X-ray repair cross-complementing protein 6 (XRCC6), found in Homo sapiens (Human).